The sequence spans 93 residues: Small ribosomal subunit protein uS19 (93 aa).

This sequence belongs to the universal ribosomal protein uS19 family.

Functionally, protein S19 forms a complex with S13 that binds strongly to the 16S ribosomal RNA. This chain is Small ribosomal subunit protein uS19, found in Mycobacterium sp. (strain JLS).